The sequence spans 313 residues: Carbamate kinase (313 aa).

It belongs to the carbamate kinase family.

Its subcellular location is the cytoplasm. It carries out the reaction hydrogencarbonate + NH4(+) + ATP = carbamoyl phosphate + ADP + H2O + H(+). Its pathway is metabolic intermediate metabolism; carbamoyl phosphate degradation; CO(2) and NH(3) from carbamoyl phosphate: step 1/1. The protein is Carbamate kinase (arcC) of Oenococcus oeni (Leuconostoc oenos).